The sequence spans 292 residues: 33 kDa chaperonin (292 aa).

Disulfide bonds link C237–C239 and C270–C273.

It belongs to the HSP33 family. Post-translationally, under oxidizing conditions two disulfide bonds are formed involving the reactive cysteines. Under reducing conditions zinc is bound to the reactive cysteines and the protein is inactive.

The protein resides in the cytoplasm. Functionally, redox regulated molecular chaperone. Protects both thermally unfolding and oxidatively damaged proteins from irreversible aggregation. Plays an important role in the bacterial defense system toward oxidative stress. The polypeptide is 33 kDa chaperonin (Lachnoclostridium phytofermentans (strain ATCC 700394 / DSM 18823 / ISDg) (Clostridium phytofermentans)).